We begin with the raw amino-acid sequence, 685 residues long: E3 ubiquitin-protein ligase RNF103 (685 aa).

4 consecutive transmembrane segments (helical) span residues Phe-6–Val-26, Leu-326–Gln-346, Leu-366–Phe-386, and Met-411–Ile-431. Acidic residues predominate over residues Glu-526–Asn-543. Residues Glu-526–Glu-550 form a disordered region. An RING-type zinc finger spans residues Cys-621–Arg-663.

In terms of assembly, interacts with DERL1 and VCP. In terms of tissue distribution, highly expressed in the normal cerebellum but not in the cerebral cortex.

It localises to the endoplasmic reticulum membrane. It catalyses the reaction S-ubiquitinyl-[E2 ubiquitin-conjugating enzyme]-L-cysteine + [acceptor protein]-L-lysine = [E2 ubiquitin-conjugating enzyme]-L-cysteine + N(6)-ubiquitinyl-[acceptor protein]-L-lysine.. It functions in the pathway protein modification; protein ubiquitination. Its function is as follows. Acts as an E2-dependent E3 ubiquitin-protein ligase, probably involved in the ER-associated protein degradation pathway. This Homo sapiens (Human) protein is E3 ubiquitin-protein ligase RNF103 (RNF103).